We begin with the raw amino-acid sequence, 333 residues long: MVQEKLRFSTRTLQWKCVESRIESKRLYYGRFILSPLMKGQADTIGIAIRRILLGEIEGTCITRVKSEKIPHEYSTIIGIEESVHEIFMNLKEIVLKSNMYGTQDASISFKGPGYITAQDIILPPSVEIVDNRQHIANVTEPVNLCIELKIERNRGYRIKTLKNFQDGSYDIDARFMPVRNVNYSIHSYVNGNEKQEILFLEIWTNGSLTPKEALYEASQNLIDLFIPFLHAEEENFNLEKKKHKVTLPLFTFHDILVKDKLRKNKKEIALKSIFIDQLELPPRIYNCLKRSNIHTLLELLNNSQEXLLKIEHFRVEDGKSILDILKIQKYFT.

The interval 1–233 is alpha N-terminal domain (alpha-NTD); it reads MVQEKLRFST…DLFIPFLHAE (233 aa). The segment at 266–333 is alpha C-terminal domain (alpha-CTD); it reads KKEIALKSIF…DILKIQKYFT (68 aa).

It belongs to the RNA polymerase alpha chain family. As to quaternary structure, in plastids the minimal PEP RNA polymerase catalytic core is composed of four subunits: alpha, beta, beta', and beta''. When a (nuclear-encoded) sigma factor is associated with the core the holoenzyme is formed, which can initiate transcription.

The protein resides in the plastid. It localises to the chloroplast. It carries out the reaction RNA(n) + a ribonucleoside 5'-triphosphate = RNA(n+1) + diphosphate. In terms of biological role, DNA-dependent RNA polymerase catalyzes the transcription of DNA into RNA using the four ribonucleoside triphosphates as substrates. The protein is DNA-directed RNA polymerase subunit alpha of Phaseolus angularis (Azuki bean).